The sequence spans 312 residues: Phospholipid phosphatase 3 (312 aa).

Over 1–33 (MQSYKYDKAIVPESKNGGSPALNNNPRKGGSKR) the chain is Cytoplasmic. The residue at position 19 (S19) is a Phosphoserine. The helical transmembrane segment at 34–54 (VLLICLDLFCLFMAALPFLII) threads the bilayer. Residues 55–85 (ETSTIKPYRRGFYCNDESIKYPLKVSETIND) are Extracellular-facing. The chain crosses the membrane as a helical span at residues 86–106 (AVLCAVGIVIAILAIITGEFY). The Cytoplasmic portion of the chain corresponds to 107-123 (RIYYLKEKSRSTTQNPY). Residues 109–110 (YY) carry the Dityrosine basolateral targeting motif motif. A helical membrane pass occupies residues 124 to 144 (VAALYKQVGCFLFGCAISQSF). Topologically, residues 145–194 (TDIAKVSIGRLRPHFLSVCDPDFSQINCSEGYIQNYRCRGEDSKVQEARK) are extracellular. The interval 149 to 157 (KVSIGRLRP) is phosphatase sequence motif I. Residue N171 is glycosylated (N-linked (GlcNAc...) asparagine). Residues 183–185 (RGE) carry the Integrin-binding motif motif. Residues 195–215 (SFFSGHASFSMFTMLYLVLYL) form a helical membrane-spanning segment. The interval 197–200 (FSGH) is phosphatase sequence motif II. H200 acts as the Proton donors in catalysis. The Cytoplasmic segment spans residues 216 to 226 (QARFTWRGARL). A helical membrane pass occupies residues 227–244 (LRPLLQFTLLMMAFYTGL). The segment at 245-256 (SRVSDYKHHPSD) is phosphatase sequence motif III. At 245–258 (SRVSDYKHHPSDVL) the chain is on the extracellular side. H252 acts as the Nucleophile in catalysis. Residues 259 to 279 (AGFAQGALVACCIVFFVSDLF) traverse the membrane as a helical segment. Residues 276-312 (SDLFKTKTSLSLPAPAIRREILSPVDIIDRNNHHNMV) form a mediates interaction with CTNND1 region. Over 280–312 (KTKTSLSLPAPAIRREILSPVDIIDRNNHHNMV) the chain is Cytoplasmic.

The protein belongs to the PA-phosphatase related phosphoesterase family. Forms functional homodimers and homooligomers that are not required for substrate recognition and catalytic activity. Can also form heterooligomers with other PLPP2 and PLPP3. Interacts with CTNND1; negatively regulates the PLPP3-mediated stabilization of beta-catenin/CTNNB1. In terms of processing, N-glycosylated. Contains high-mannose oligosaccharides. As to expression, detected in lung, cerebellum and heart atrium.

The protein resides in the cell membrane. It is found in the basolateral cell membrane. Its subcellular location is the endoplasmic reticulum membrane. It localises to the endoplasmic reticulum-Golgi intermediate compartment membrane. The protein localises to the golgi apparatus membrane. The protein resides in the golgi apparatus. It is found in the trans-Golgi network membrane. Its subcellular location is the membrane raft. It catalyses the reaction a 1,2-diacyl-sn-glycero-3-phosphate + H2O = a 1,2-diacyl-sn-glycerol + phosphate. It carries out the reaction 1,2-dihexadecanoyl-sn-glycero-3-phosphate + H2O = 1,2-dihexadecanoyl-sn-glycerol + phosphate. The enzyme catalyses 1,2-di-(9Z-octadecenoyl)-sn-glycero-3-phosphate + H2O = 1,2-di-(9Z-octadecenoyl)-sn-glycerol + phosphate. The catalysed reaction is a monoacyl-sn-glycero-3-phosphate + H2O = a monoacylglycerol + phosphate. It catalyses the reaction (9Z)-octadecenoyl-sn-glycero-3-phosphate + H2O = (9Z-octadecenoyl)-glycerol + phosphate. It carries out the reaction sphing-4-enine 1-phosphate + H2O = sphing-4-enine + phosphate. The enzyme catalyses an N-acylsphing-4-enine 1-phosphate + H2O = an N-acylsphing-4-enine + phosphate. The catalysed reaction is N-(octanoyl)-sphing-4-enine-1-phosphate + H2O = N-octanoylsphing-4-enine + phosphate. It catalyses the reaction N-(9Z-octadecenoyl)-ethanolamine phosphate + H2O = N-(9Z-octadecenoyl) ethanolamine + phosphate. It functions in the pathway lipid metabolism; phospholipid metabolism. With respect to regulation, magnesium-independent phospholipid phosphatase. Insensitive to N-ethylmaleimide. Magnesium-independent phospholipid phosphatase of the plasma membrane that catalyzes the dephosphorylation of a variety of glycerolipid and sphingolipid phosphate esters including phosphatidate/PA, lysophosphatidate/LPA, diacylglycerol pyrophosphate/DGPP, sphingosine 1-phosphate/S1P and ceramide 1-phosphate/C1P. Also acts on N-oleoyl ethanolamine phosphate/N-(9Z-octadecenoyl)-ethanolamine phosphate, a potential physiological compound. Has both an extracellular and an intracellular phosphatase activity, allowing the hydrolysis and the cellular uptake of these bioactive lipid mediators from the milieu, regulating signal transduction in different cellular processes. Through the dephosphorylation of extracellular sphingosine-1-phosphate and the regulation of its extra- and intracellular availability, plays a role in vascular homeostasis, regulating endothelial cell migration, adhesion, survival, proliferation and the production of pro-inflammatory cytokines. By maintaining the appropriate levels of this lipid in the cerebellum, also ensure its proper development and function. Through its intracellular lipid phosphatase activity may act in early compartments of the secretory pathway, regulating the formation of Golgi to endoplasmic reticulum retrograde transport carriers. Functionally, independently of this phosphatase activity may also function in the Wnt signaling pathway and the stabilization of beta-catenin/CTNNB1, thereby regulating cell proliferation, migration and differentiation in angiogenesis or yet in tumor growth. Also plays a role in integrin-mediated cell-cell adhesion in angiogenesis. In Mus musculus (Mouse), this protein is Phospholipid phosphatase 3.